A 155-amino-acid chain; its full sequence is 2-C-methyl-D-erythritol 2,4-cyclodiphosphate synthase (155 aa).

Residues Asp8 and His10 each coordinate a divalent metal cation. Residues 8-10 (DVH) and 34-35 (HS) each bind 4-CDP-2-C-methyl-D-erythritol 2-phosphate. His42 provides a ligand contact to a divalent metal cation. Residues 56–58 (DIG), 61–65 (FPDSD), 100–106 (AQKPKML), 132–135 (TTEE), Phe139, and Lys142 contribute to the 4-CDP-2-C-methyl-D-erythritol 2-phosphate site.

This sequence belongs to the IspF family. As to quaternary structure, homotrimer. The cofactor is a divalent metal cation.

The catalysed reaction is 4-CDP-2-C-methyl-D-erythritol 2-phosphate = 2-C-methyl-D-erythritol 2,4-cyclic diphosphate + CMP. Its pathway is isoprenoid biosynthesis; isopentenyl diphosphate biosynthesis via DXP pathway; isopentenyl diphosphate from 1-deoxy-D-xylulose 5-phosphate: step 4/6. Its function is as follows. Involved in the biosynthesis of isopentenyl diphosphate (IPP) and dimethylallyl diphosphate (DMAPP), two major building blocks of isoprenoid compounds. Catalyzes the conversion of 4-diphosphocytidyl-2-C-methyl-D-erythritol 2-phosphate (CDP-ME2P) to 2-C-methyl-D-erythritol 2,4-cyclodiphosphate (ME-CPP) with a corresponding release of cytidine 5-monophosphate (CMP). In Clostridium botulinum (strain ATCC 19397 / Type A), this protein is 2-C-methyl-D-erythritol 2,4-cyclodiphosphate synthase.